A 709-amino-acid polypeptide reads, in one-letter code: Solute carrier family 15 member 1 (709 aa).

A helical transmembrane segment spans residues 1–21; that stretch reads MGMSKSRGCFGYPLSIFFIVV. Residues 22–53 are Extracellular-facing; sequence NEFCERFSYYGMRALLVLYFRNFLGWDDNLST. Asn50 carries an N-linked (GlcNAc...) asparagine glycan. Residues 54–74 traverse the membrane as a helical segment; that stretch reads AIYHTFVALCYLTPILGALIA. The Cytoplasmic segment spans residues 75–82; the sequence is DSWLGKFK. A helical membrane pass occupies residues 83–103; it reads TIVSLSIVYTIGQAVISVSSI. Topologically, residues 104–118 are extracellular; sequence NDLTDHDHNGSPDSL. Residues 119–139 form a helical membrane-spanning segment; the sequence is PVHVALSMVGLALIALGTGGI. Topologically, residues 140–161 are cytoplasmic; it reads KPCVSAFGGDQFEEGQEKQRNR. Residues 162 to 182 traverse the membrane as a helical segment; that stretch reads FFSIFYLAINGGSLLSTIITP. Over 183 to 198 the chain is Extracellular; the sequence is ILRVQQCGIHSQQACY. A helical transmembrane segment spans residues 199–219; the sequence is PLAFGVPAALMAVALIVFVLG. The Cytoplasmic portion of the chain corresponds to 220–276; sequence SGMYKKFQPQGNIMGKVAKCIGFAIKNRFRHRSKAYPKREHWLDWAKEKYDERLISQ. The chain crosses the membrane as a helical span at residues 277–297; the sequence is IKMVTKVMFLYIPLPMFWALF. Residues 298–327 lie on the Extracellular side of the membrane; the sequence is DQQGSRWTLQATTMNGKIGAIEIQPDQMQT. A helical membrane pass occupies residues 328 to 348; it reads VNAILIVIMVPIVDAVVYPLI. Topologically, residues 349–361 are cytoplasmic; sequence AKCGFNFTSLKKM. A helical membrane pass occupies residues 362–382; sequence TVGMFLASMAFVVAAIVQVEI. At 383–585 the chain is on the extracellular side; it reads DKTLPVFPGG…PPNTVNMALQ (203 aa). An extracellular domain (ECD) region spans residues 383 to 585; that stretch reads DKTLPVFPGG…PPNTVNMALQ (203 aa). Asn406, Asn439, Asn515, and Asn532 each carry an N-linked (GlcNAc...) asparagine glycan. A helical membrane pass occupies residues 586–606; sequence IPQYFLLTCGEVVFSVTGLEF. At 607-620 the chain is on the cytoplasmic side; that stretch reads SYSQAPSNMKSVLQ. A helical membrane pass occupies residues 621 to 641; sequence AGWLLTVAVGNIIVLIVAGAG. At 642-646 the chain is on the extracellular side; that stretch reads HFPKQ. The helical transmembrane segment at 647–667 threads the bilayer; the sequence is WAEYILFASLLLVVCVIFAIM. The Cytoplasmic segment spans residues 668-709; that stretch reads ARFYTYINPAEIEAQFDEDEKKKGIGKENPYSSLEPVSQTNM. The segment at 690 to 709 is disordered; sequence KGIGKENPYSSLEPVSQTNM. A compositionally biased stretch (polar residues) spans 697–709; sequence PYSSLEPVSQTNM.

Belongs to the major facilitator superfamily. Proton-dependent oligopeptide transporter (POT/PTR) (TC 2.A.17) family. As to quaternary structure, interacts (via extracellular domain region) with trypsin.

It is found in the apical cell membrane. It carries out the reaction a dipeptide(out) + H(+)(out) = a dipeptide(in) + H(+)(in). It catalyses the reaction an L-amino acid tripeptide(out) + H(+)(out) = an L-amino acid tripeptide(in) + H(+)(in). The catalysed reaction is L-alanyl-L-lysine(out) + H(+)(out) = L-alanyl-L-lysine(in) + H(+)(in). The enzyme catalyses L-alanyl-L-proline(out) + H(+)(out) = L-alanyl-L-proline(in) + H(+)(in). It carries out the reaction L-alanyl-L-valine(out) + H(+)(out) = L-alanyl-L-valine(in) + H(+)(in). It catalyses the reaction carnosine(out) + H(+)(out) = carnosine(in) + H(+)(in). The catalysed reaction is glycyl-L-glutamine(out) + H(+)(out) = glycyl-L-glutamine(in) + H(+)(in). The enzyme catalyses glycyl-L-leucine(out) + H(+)(out) = glycyl-L-leucine(in) + H(+)(in). It carries out the reaction glycyl-L-proline(out) + H(+)(out) = glycyl-L-proline(in) + H(+)(in). It catalyses the reaction glycyl-sarcosine(out) + H(+)(out) = glycyl-sarcosine(in) + H(+)(in). The catalysed reaction is L-leucyl-L-leucine(out) + H(+)(out) = L-leucyl-L-leucine(in) + H(+)(in). The enzyme catalyses L-leucyl-L-proline(out) + H(+)(out) = L-leucyl-L-proline(in) + H(+)(in). It carries out the reaction L-phenylalanyl-L-leucine(out) + H(+)(out) = L-phenylalanyl-L-leucine(in) + H(+)(in). It catalyses the reaction L-phenylalanyl-L-phenylalanine(out) + H(+)(out) = L-phenylalanyl-L-phenylalanine(in) + H(+)(in). The catalysed reaction is L-lysyl-glycine(out) + H(+)(out) = L-lysyl-glycine(in) + H(+)(in). The enzyme catalyses L-tyrosylglycine(out) + H(+)(out) = L-tyrosylglycine(in) + H(+)(in). It carries out the reaction L-alanyl-L-aspartate(out) + 2 H(+)(out) = L-alanyl-L-aspartate(in) + 2 H(+)(in). It catalyses the reaction L-aspartyl-glycine(out) + 2 H(+)(out) = L-aspartyl-glycine(in) + 2 H(+)(in). The catalysed reaction is glycyl-L-aspartate(out) + 2 H(+)(out) = glycyl-L-aspartate(in) + 2 H(+)(in). The enzyme catalyses glycyl-L-glutamate(out) + 2 H(+)(out) = glycyl-L-glutamate(in) + 2 H(+)(in). It carries out the reaction L-alanyl-L-leucyl-L-alanine(out) + H(+)(out) = L-alanyl-L-leucyl-L-alanine(in) + H(+)(in). It catalyses the reaction L-alanyl-L-prolylglycine(out) + H(+)(out) = L-alanyl-L-prolylglycine(in) + H(+)(in). The catalysed reaction is glycylglycyl-L-isoleucine(out) + H(+)(out) = glycylglycyl-L-isoleucine(in) + H(+)(in). The enzyme catalyses glycylglycyl-L-proline(out) + H(+)(out) = glycylglycyl-L-proline(in) + H(+)(in). It carries out the reaction L-methionyl-L-phenylalanyl-L-methionine(out) + H(+)(out) = L-methionyl-L-phenylalanyl-L-methionine(in) + H(+)(in). It catalyses the reaction N-acetyl-D-muramoyl-L-alanyl-D-isoglutamine(out) + 2 H(+)(out) = N-acetyl-D-muramoyl-L-alanyl-D-isoglutamine(in) + 2 H(+)(in). The catalysed reaction is N(alpha)-formyl-L-methionyl-L-leucyl-L-phenylalanine(out) + 2 H(+)(out) = N(alpha)-formyl-L-methionyl-L-leucyl-L-phenylalanine(in) + 2 H(+)(in). Its function is as follows. Electrogenic proton-coupled amino-acid transporter that transports oligopeptides of 2 to 4 amino acids with a preference for dipeptides. Transports neutral and monovalently charged peptides with a proton to peptide stoichiometry of 1:1 or 2:1. Primarily responsible for the absorption of dietary di- and tripeptides from the small intestinal lumen. Mediates transepithelial transport of muramyl and N-formylated bacterial dipeptides contributing to recognition of pathogenic bacteria by the mucosal immune system. This Mus musculus (Mouse) protein is Solute carrier family 15 member 1.